Reading from the N-terminus, the 322-residue chain is Interferon regulatory factor 1 (322 aa).

A DNA-binding region (IRF tryptophan pentad repeat) is located at residues 5–113 (RMRMRPWLEM…SAVRVYRMLP (109 aa)). Lys-78 carries the post-translational modification N6-acetyllysine. A disordered region spans residues 92–164 (EEVKDQSRNK…STLPDDHSSY (73 aa)). Positions 141-157 (GESSPDTFSDGLSSSTL) are enriched in polar residues. Residues Lys-276 and Lys-296 each participate in a glycyl lysine isopeptide (Lys-Gly) (interchain with G-Cter in SUMO) cross-link.

The protein belongs to the IRF family. Monomer. Homodimer. Interacts with EP300. Interacts with MYD88. Interacts with PIAS3. Interacts with SPOP. Phosphorylated by CK2 and this positively regulates its activity. In terms of processing, sumoylation represses the transcriptional activity and displays enhanced resistance to protein degradation. Sumoylated by UBE2I/UBC9 and SUMO1. Inactivates the tumor suppressor activity. Elevated levels in tumor cells. Major site is Lys-276. Sumoylation is enhanced by PIAS3. Desumoylated by SENP1 in tumor cells and appears to compete with ubiquitination on C-terminal sites. Post-translationally, ubiquitinated in a SPOP-depedent manner. Appears to compete with sumoylation on C-terminal sites.

Its subcellular location is the nucleus. The protein resides in the cytoplasm. Activated by MYD88. In terms of biological role, transcriptional regulator which displays a remarkable functional diversity in the regulation of cellular responses. Regulates transcription of IFN and IFN-inducible genes, host response to viral and bacterial infections, regulation of many genes expressed during hematopoiesis, inflammation, immune responses and cell proliferation and differentiation, regulation of the cell cycle and induction of growth arrest and programmed cell death following DNA damage. Stimulates both innate and acquired immune responses through the activation of specific target genes and can act as a transcriptional activator and repressor regulating target genes by binding to an interferon-stimulated response element (ISRE) in their promoters. Has an essentail role in IFNG-dependent immunity to mycobacteria. Binds to a consensus sequence in gene promoters. Its target genes for transcriptional activation activity include: genes involved in anti-viral response, such as IFN-alpha/beta, RIGI, TNFSF10/TRAIL, ZBP1, OAS1/2, PIAS1/GBP, EIF2AK2/PKR and RSAD2/viperin; antibacterial response, such as GBP2, GBP5 and NOS2/INOS; anti-proliferative response, such as p53/TP53, LOX and CDKN1A; apoptosis, such as BBC3/PUMA, CASP1, CASP7 and CASP8; immune response, such as IL7, IL12A/B and IL15, PTGS2/COX2 and CYBB; DNA damage responses and DNA repair, such as POLQ/POLH; MHC class I expression, such as TAP1, PSMB9/LMP2, PSME1/PA28A, PSME2/PA28B and B2M and MHC class II expression, such as CIITA; metabolic enzymes, such as ACOD1/IRG1. Represses genes involved in anti-proliferative response, such as BIRC5/survivin, CCNB1, CCNE1, CDK1, CDK2 and CDK4 and in immune response, such as FOXP3, IL4, ANXA2 and TLR4. Stimulates p53/TP53-dependent transcription through enhanced recruitment of EP300 leading to increased acetylation of p53/TP53. Plays an important role in immune response directly affecting NK maturation and activity, macrophage production of IL12, Th1 development and maturation of CD8+ T-cells. Also implicated in the differentiation and maturation of dendritic cells and in the suppression of regulatory T (Treg) cells development. Acts as a tumor suppressor and plays a role not only in antagonism of tumor cell growth but also in stimulating an immune response against tumor cells. The chain is Interferon regulatory factor 1 (IRF1) from Sus scrofa (Pig).